A 208-amino-acid chain; its full sequence is FMN-dependent NADH:quinone oxidoreductase 4 (208 aa).

This sequence belongs to the azoreductase type 1 family. In terms of assembly, homodimer. FMN serves as cofactor.

The enzyme catalyses 2 a quinone + NADH + H(+) = 2 a 1,4-benzosemiquinone + NAD(+). It catalyses the reaction N,N-dimethyl-1,4-phenylenediamine + anthranilate + 2 NAD(+) = 2-(4-dimethylaminophenyl)diazenylbenzoate + 2 NADH + 2 H(+). Its function is as follows. Quinone reductase that provides resistance to thiol-specific stress caused by electrophilic quinones. Functionally, also exhibits azoreductase activity. Catalyzes the reductive cleavage of the azo bond in aromatic azo compounds to the corresponding amines. This Bacillus anthracis protein is FMN-dependent NADH:quinone oxidoreductase 4.